The sequence spans 363 residues: MTKSYHIAVLPGDGIGPEVMAQAHKVLDAVRQRFGIRITTSEYDVGGIAIDRQGTPLPQATVAGCEQADAILFGSVGGPKWEHLPPAEQPERGALLPLRKHFKLFSNLRPARLYQGLEAFCPLRSDIAAKGFDILCVRELTGGIYFGQPKGREGSGQYERAFDTEVYHRFEIERIAHIAFESARKRRSIVTSIDKANVLQSSILWREIVTEVAKAYPDVKLSHLYIDNATMQLIKDPSQFDVMLCSNLFGDILSDECAMITGSMGMLPSASLNEQGFGLYEPAGGSAPDIAGKDIANPIAQILSLALLLRYSLGADDAAEAIEKAVNTALAEGYRTADLASASNAIGTSEMGDVIARFVAQGA.

Position 78–91 (G78–E91) interacts with NAD(+). Substrate-binding residues include R99, R109, R138, and D227. Residues D227, D251, and D255 each coordinate Mg(2+). G285–N297 contributes to the NAD(+) binding site.

This sequence belongs to the isocitrate and isopropylmalate dehydrogenases family. LeuB type 1 subfamily. In terms of assembly, homodimer. Mg(2+) is required as a cofactor. Requires Mn(2+) as cofactor.

It localises to the cytoplasm. The catalysed reaction is (2R,3S)-3-isopropylmalate + NAD(+) = 4-methyl-2-oxopentanoate + CO2 + NADH. The protein operates within amino-acid biosynthesis; L-leucine biosynthesis; L-leucine from 3-methyl-2-oxobutanoate: step 3/4. Its function is as follows. Catalyzes the oxidation of 3-carboxy-2-hydroxy-4-methylpentanoate (3-isopropylmalate) to 3-carboxy-4-methyl-2-oxopentanoate. The product decarboxylates to 4-methyl-2 oxopentanoate. This chain is 3-isopropylmalate dehydrogenase, found in Pectobacterium atrosepticum (strain SCRI 1043 / ATCC BAA-672) (Erwinia carotovora subsp. atroseptica).